A 541-amino-acid polypeptide reads, in one-letter code: Chaperonin GroEL (541 aa).

ATP contacts are provided by residues 29–32, 86–90, G413, 476–478, and D492; these read TLGP, DGTTT, and NAA. Positions 521–541 are disordered; sequence KPEENAPAAPAAPNPGMGGMM. Low complexity predominate over residues 525–535; it reads NAPAAPAAPNP.

It belongs to the chaperonin (HSP60) family. Forms a cylinder of 14 subunits composed of two heptameric rings stacked back-to-back. Interacts with the co-chaperonin GroES.

It is found in the cytoplasm. It carries out the reaction ATP + H2O + a folded polypeptide = ADP + phosphate + an unfolded polypeptide.. Together with its co-chaperonin GroES, plays an essential role in assisting protein folding. The GroEL-GroES system forms a nano-cage that allows encapsulation of the non-native substrate proteins and provides a physical environment optimized to promote and accelerate protein folding. This chain is Chaperonin GroEL, found in Lactiplantibacillus plantarum (strain ATCC BAA-793 / NCIMB 8826 / WCFS1) (Lactobacillus plantarum).